Consider the following 307-residue polypeptide: GTPase Era (307 aa).

One can recognise an Era-type G domain in the interval His-14 to Glu-184. Residues Gly-22–Ser-29 form a G1 region. Gly-22–Ser-29 serves as a coordination point for GTP. A G2 region spans residues Gln-48 to Arg-52. The interval Asp-69–Gly-72 is G3. GTP is bound by residues Asp-69–Leu-73 and Asn-131–Asp-134. Positions Asn-131–Asp-134 are G4. A G5 region spans residues Leu-162–Ala-164. Positions Leu-215–Pro-292 constitute a KH type-2 domain.

It belongs to the TRAFAC class TrmE-Era-EngA-EngB-Septin-like GTPase superfamily. Era GTPase family. In terms of assembly, monomer.

The protein localises to the cytoplasm. Its subcellular location is the cell membrane. An essential GTPase that binds both GDP and GTP, with rapid nucleotide exchange. Plays a role in 16S rRNA processing and 30S ribosomal subunit biogenesis and possibly also in cell cycle regulation and energy metabolism. This is GTPase Era from Deinococcus deserti (strain DSM 17065 / CIP 109153 / LMG 22923 / VCD115).